The following is a 406-amino-acid chain: Riboflavin biosynthesis protein RibBA (406 aa).

The tract at residues 1–209 is DHBP synthase; the sequence is MSEREEFKFN…IADLIKYRLR (209 aa). D-ribulose 5-phosphate is bound by residues 33–34, aspartate 38, 148–152, and glutamate 172; these read RE and RAGHT. Mg(2+) is bound at residue glutamate 34. Histidine 151 provides a ligand contact to Mg(2+). A GTP cyclohydrolase II region spans residues 210-406; it reads RETLVEKVAS…VKKDKLGHMF (197 aa). 260–264 provides a ligand contact to GTP; that stretch reads RVHSE. Positions 265, 276, and 278 each coordinate Zn(2+). Residues glutamine 281, 304–306, and threonine 326 each bind GTP; that span reads EGR. The active-site Proton acceptor; for GTP cyclohydrolase activity is the aspartate 338. Arginine 340 (nucleophile; for GTP cyclohydrolase activity) is an active-site residue. The GTP site is built by threonine 361 and lysine 366.

It in the N-terminal section; belongs to the DHBP synthase family. This sequence in the C-terminal section; belongs to the GTP cyclohydrolase II family. Mg(2+) serves as cofactor. The cofactor is Mn(2+). It depends on Zn(2+) as a cofactor.

It carries out the reaction D-ribulose 5-phosphate = (2S)-2-hydroxy-3-oxobutyl phosphate + formate + H(+). The catalysed reaction is GTP + 4 H2O = 2,5-diamino-6-hydroxy-4-(5-phosphoribosylamino)-pyrimidine + formate + 2 phosphate + 3 H(+). The protein operates within cofactor biosynthesis; riboflavin biosynthesis; 2-hydroxy-3-oxobutyl phosphate from D-ribulose 5-phosphate: step 1/1. It functions in the pathway cofactor biosynthesis; riboflavin biosynthesis; 5-amino-6-(D-ribitylamino)uracil from GTP: step 1/4. Functionally, catalyzes the conversion of D-ribulose 5-phosphate to formate and 3,4-dihydroxy-2-butanone 4-phosphate. In terms of biological role, catalyzes the conversion of GTP to 2,5-diamino-6-ribosylamino-4(3H)-pyrimidinone 5'-phosphate (DARP), formate and pyrophosphate. This is Riboflavin biosynthesis protein RibBA from Aquifex aeolicus (strain VF5).